The chain runs to 588 residues: Proline--tRNA ligase (588 aa).

The protein belongs to the class-II aminoacyl-tRNA synthetase family. ProS type 1 subfamily. As to quaternary structure, homodimer.

It localises to the cytoplasm. The catalysed reaction is tRNA(Pro) + L-proline + ATP = L-prolyl-tRNA(Pro) + AMP + diphosphate. Functionally, catalyzes the attachment of proline to tRNA(Pro) in a two-step reaction: proline is first activated by ATP to form Pro-AMP and then transferred to the acceptor end of tRNA(Pro). As ProRS can inadvertently accommodate and process non-cognate amino acids such as alanine and cysteine, to avoid such errors it has two additional distinct editing activities against alanine. One activity is designated as 'pretransfer' editing and involves the tRNA(Pro)-independent hydrolysis of activated Ala-AMP. The other activity is designated 'posttransfer' editing and involves deacylation of mischarged Ala-tRNA(Pro). The misacylated Cys-tRNA(Pro) is not edited by ProRS. The sequence is that of Proline--tRNA ligase from Corynebacterium glutamicum (strain ATCC 13032 / DSM 20300 / JCM 1318 / BCRC 11384 / CCUG 27702 / LMG 3730 / NBRC 12168 / NCIMB 10025 / NRRL B-2784 / 534).